The primary structure comprises 129 residues: Lysozyme C (129 aa).

The C-type lysozyme domain maps to 1–129; sequence KVYGRCELAA…VHAWIRGCRL (129 aa). 4 disulfides stabilise this stretch: cysteine 6–cysteine 127, cysteine 30–cysteine 115, cysteine 64–cysteine 80, and cysteine 76–cysteine 94. Residues glutamate 35 and aspartate 52 contribute to the active site.

It belongs to the glycosyl hydrolase 22 family. Monomer.

It localises to the secreted. It catalyses the reaction Hydrolysis of (1-&gt;4)-beta-linkages between N-acetylmuramic acid and N-acetyl-D-glucosamine residues in a peptidoglycan and between N-acetyl-D-glucosamine residues in chitodextrins.. Functionally, lysozymes have primarily a bacteriolytic function; those in tissues and body fluids are associated with the monocyte-macrophage system and enhance the activity of immunoagents. In Pavo cristatus (Indian peafowl), this protein is Lysozyme C (LYZ).